We begin with the raw amino-acid sequence, 401 residues long: cAMP-dependent protein kinase type II-alpha regulatory subunit (401 aa).

Ser2 bears the N-acetylserine mark. The interval 2–135 is dimerization and phosphorylation; the sequence is SHIQIPPGLT…RLQEACKDIL (134 aa). The disordered stretch occupies residues 43 to 65; sequence ARSRASTPPAAPPSGSQDFDPGA. A compositionally biased stretch (low complexity) spans 46–58; it reads RASTPPAAPPSGS. Phosphoserine occurs at positions 48, 75, and 77. Position 96 is a phosphoserine; by PKA (Ser96). 3',5'-cyclic AMP is bound by residues 136–257, Glu205, Arg214, 258–401, Glu335, and Arg344; these read LFKN…ESVP and LLKS…DPGQ. Thr212 is subject to Phosphothreonine; by PDPK1. Phosphoserine occurs at positions 347 and 392.

It belongs to the cAMP-dependent kinase regulatory chain family. In terms of assembly, the inactive form of the enzyme is composed of two regulatory chains and two catalytic chains. Activation by cAMP produces two active catalytic monomers and a regulatory dimer that binds four cAMP molecules. Interacts with AKAP4 and CBFA2T3. Interacts with the phosphorylated form of PJA2. Interacts with MYRIP; this interaction may link PKA to components of the exocytosis machinery, thus facilitating exocytosis, including insulin release. Forms a complex composed of PRKAR2A, GSK3B and GSKIP through GSKIP interaction; facilitates PKA-induced phosphorylation and regulates GSK3B activity. Interacts with ADCY8; inhibits adenylate cyclase activity through PKA phosphorylation. In terms of processing, a second phosphorylation site has not been located. Phosphorylation of Thr-212 by PDPK1 seems to attenuate the activity of PKA, perhaps by strengthening interaction between the regulatory and the catalytic subunits. Four types of regulatory chains are found: I-alpha, I-beta, II-alpha, and II-beta. Their expression varies among tissues and is in some cases constitutive and in others inducible.

The protein localises to the cytoplasm. It is found in the cell membrane. Its function is as follows. Regulatory subunit of the cAMP-dependent protein kinases involved in cAMP signaling in cells. Type II regulatory chains mediate membrane association by binding to anchoring proteins, including the MAP2 kinase. The polypeptide is cAMP-dependent protein kinase type II-alpha regulatory subunit (PRKAR2A) (Bos taurus (Bovine)).